Here is a 463-residue protein sequence, read N- to C-terminus: Ribulose bisphosphate carboxylase (463 aa).

A substrate-binding site is contributed by N116. K171 acts as the Proton acceptor in catalysis. K173 contributes to the substrate binding site. Residues K196, D198, and E199 each coordinate Mg(2+). K196 bears the N6-carboxylysine mark. The active-site Proton acceptor is H294. Substrate-binding residues include R295, H328, and S375.

Belongs to the RuBisCO large chain family. Type II subfamily. Homodimer. It depends on Mg(2+) as a cofactor.

The catalysed reaction is 2 (2R)-3-phosphoglycerate + 2 H(+) = D-ribulose 1,5-bisphosphate + CO2 + H2O. It carries out the reaction D-ribulose 1,5-bisphosphate + O2 = 2-phosphoglycolate + (2R)-3-phosphoglycerate + 2 H(+). RuBisCO catalyzes two reactions: the carboxylation of D-ribulose 1,5-bisphosphate, the primary event in carbon dioxide fixation, as well as the oxidative fragmentation of the pentose substrate. Both reactions occur simultaneously and in competition at the same active site. This chain is Ribulose bisphosphate carboxylase, found in Hydrogenovibrio marinus.